Consider the following 257-residue polypeptide: Pimeloyl-[acyl-carrier protein] methyl ester esterase (257 aa).

Residues 15–241 (HLVLLHGWGL…KAAHAPFVSH (227 aa)) form the AB hydrolase-1 domain. Substrate contacts are provided by residues Trp22, 82–83 (SL), and 143–147 (FLALQ). The Nucleophile role is filled by Ser82. Residues Asp207 and His235 contribute to the active site. His235 is a binding site for substrate.

This sequence belongs to the AB hydrolase superfamily. Carboxylesterase BioH family. In terms of assembly, monomer.

It is found in the cytoplasm. It catalyses the reaction 6-carboxyhexanoyl-[ACP] methyl ester + H2O = 6-carboxyhexanoyl-[ACP] + methanol + H(+). Its pathway is cofactor biosynthesis; biotin biosynthesis. Its function is as follows. The physiological role of BioH is to remove the methyl group introduced by BioC when the pimeloyl moiety is complete. It allows to synthesize pimeloyl-ACP via the fatty acid synthetic pathway through the hydrolysis of the ester bonds of pimeloyl-ACP esters. The chain is Pimeloyl-[acyl-carrier protein] methyl ester esterase from Klebsiella pneumoniae (strain 342).